A 1408-amino-acid chain; its full sequence is TSET complex member tstA (1408 aa).

Disordered regions lie at residues 259 to 347 (FWPT…SIIA), 998 to 1055 (QQSS…AVGS), and 1091 to 1139 (SSSS…TNLN). The span at 266-308 (NNNNNNNNQQINNNNNNNNNNNNNNNNNNNNNNNNNNNNNQNN) shows a compositional bias: low complexity. A compositionally biased stretch (polar residues) spans 309–318 (LINGISSMNL). 2 stretches are compositionally biased toward low complexity: residues 319–347 (SSITGTTTTTTTTGNSPITSPTSPTSIIA) and 998–1051 (QQSS…ISTS).

It belongs to the TPLATE family. In terms of assembly, component of the TSET complex, a heterohexamer composed of tstA, tstB, tstC, tstD, tstE and tstF, which may act in plasma membrane turnover. tstA, tstB, tstC and tstD are likely to be the core complex members with tstE and tstF acting as associated scaffold proteins.

The protein is TSET complex member tstA of Dictyostelium discoideum (Social amoeba).